A 269-amino-acid polypeptide reads, in one-letter code: Shikimate dehydrogenase (NADP(+)) (269 aa).

Residues 22–24 (TLS) and Thr-68 each bind shikimate. Lys-72 serves as the catalytic Proton acceptor. 2 residues coordinate shikimate: Asn-93 and Asp-104. NADP(+) contacts are provided by residues 128-132 (GAGGA), 152-157 (NRTKSR), and Phe-210. Residue Tyr-212 participates in shikimate binding. Residue Gly-233 participates in NADP(+) binding.

Belongs to the shikimate dehydrogenase family. Homodimer.

The catalysed reaction is shikimate + NADP(+) = 3-dehydroshikimate + NADPH + H(+). The protein operates within metabolic intermediate biosynthesis; chorismate biosynthesis; chorismate from D-erythrose 4-phosphate and phosphoenolpyruvate: step 4/7. Its function is as follows. Involved in the biosynthesis of the chorismate, which leads to the biosynthesis of aromatic amino acids. Catalyzes the reversible NADPH linked reduction of 3-dehydroshikimate (DHSA) to yield shikimate (SA). The polypeptide is Shikimate dehydrogenase (NADP(+)) (Saccharolobus solfataricus (strain ATCC 35092 / DSM 1617 / JCM 11322 / P2) (Sulfolobus solfataricus)).